Here is a 443-residue protein sequence, read N- to C-terminus: Large ribosomal subunit protein mL50 (443 aa).

The tract at residues 121-145 (QPTRADAPEKIRDPNYEPATSGAGL) is disordered. The segment covering 126–135 (DAPEKIRDPN) has biased composition (basic and acidic residues).

Belongs to the mitochondrion-specific ribosomal protein mL50 family. In terms of assembly, component of the mitochondrial large ribosomal subunit (mt-LSU). Mature N.crassa 74S mitochondrial ribosomes consist of a small (37S) and a large (54S) subunit. The 37S small subunit contains a 16S ribosomal RNA (16S mt-rRNA) and 32 different proteins. The 54S large subunit contains a 23S rRNA (23S mt-rRNA) and 42 different proteins.

The protein resides in the mitochondrion. In terms of biological role, component of the mitochondrial ribosome (mitoribosome), a dedicated translation machinery responsible for the synthesis of mitochondrial genome-encoded proteins, including at least some of the essential transmembrane subunits of the mitochondrial respiratory chain. The mitoribosomes are attached to the mitochondrial inner membrane and translation products are cotranslationally integrated into the membrane. The sequence is that of Large ribosomal subunit protein mL50 (mrpl13) from Neurospora crassa (strain ATCC 24698 / 74-OR23-1A / CBS 708.71 / DSM 1257 / FGSC 987).